Reading from the N-terminus, the 794-residue chain is Elongator complex protein 2 (794 aa).

WD repeat units follow at residues 55 to 93 (EHTK…TTKS), 98 to 140 (GHTS…YVCF), 147 to 188 (DGFC…AGEG), 203 to 244 (GHED…KEQM), 286 to 328 (GHEG…IWLE), 337 to 376 (GNSV…PQLW), 384 to 423 (GHYG…GANP), 433 to 472 (IHGY…ENFR), 557 to 601 (GHGY…QIQK), 604 to 643 (GHQL…VSYQ), 654 to 693 (VHTR…KESS), 705 to 751 (LKNE…WKLL), and 759 to 794 (AHHL…IKLT).

The protein belongs to the WD repeat ELP2 family. As to quaternary structure, component of the elongator complex composed of Elp1, Elp2, Elp3, Elp4, Elp5 and Elp6. The elongator complex associates with and stabilizes microtubules; efficient interaction requires the full complex.

Its subcellular location is the cytoplasm. It localises to the nucleus. The protein resides in the cytoskeleton. It is found in the spindle. The protein operates within tRNA modification; 5-methoxycarbonylmethyl-2-thiouridine-tRNA biosynthesis. Component of the elongator complex, which is required for multiple tRNA modifications, including mcm5U (5-methoxycarbonylmethyl uridine), mcm5s2U (5-methoxycarbonylmethyl-2-thiouridine), and ncm5U (5-carbamoylmethyl uridine). The elongator complex catalyzes the formation of carboxymethyluridine in the wobble base at position 34 in tRNAs. Binding by the elongator complex stabilizes microtubules and promotes their growth. This induces central spindle asymmetry, promoting polarized signaling endosome trafficking during asymmetric cell division and cell fate assignation of sensory organ precursor cells. Involved in the regulation of the STAT pathway. This is Elongator complex protein 2 from Drosophila melanogaster (Fruit fly).